The following is a 375-amino-acid chain: Probable pectin lyase D (375 aa).

An N-terminal signal peptide occupies residues 1–19; that stretch reads MKYAAVLTTVAALASRALG. Cystine bridges form between Cys82–Cys101 and Cys91–Cys225. An N-linked (GlcNAc...) asparagine glycan is attached at Asn128. Arg255 is a catalytic residue. The cysteines at positions 321 and 329 are disulfide-linked.

This sequence belongs to the polysaccharide lyase 1 family.

The protein localises to the secreted. It carries out the reaction Eliminative cleavage of (1-&gt;4)-alpha-D-galacturonan methyl ester to give oligosaccharides with 4-deoxy-6-O-methyl-alpha-D-galact-4-enuronosyl groups at their non-reducing ends.. In terms of biological role, pectinolytic enzymes consist of four classes of enzymes: pectin lyase, polygalacturonase, pectin methylesterase and rhamnogalacturonase. Among pectinolytic enzymes, pectin lyase is the most important in depolymerization of pectin, since it cleaves internal glycosidic bonds of highly methylated pectins. The protein is Probable pectin lyase D (pelD) of Aspergillus flavus (strain ATCC 200026 / FGSC A1120 / IAM 13836 / NRRL 3357 / JCM 12722 / SRRC 167).